The primary structure comprises 415 residues: Gamma-glutamyl phosphate reductase (415 aa).

It belongs to the gamma-glutamyl phosphate reductase family.

It is found in the cytoplasm. It carries out the reaction L-glutamate 5-semialdehyde + phosphate + NADP(+) = L-glutamyl 5-phosphate + NADPH + H(+). The protein operates within amino-acid biosynthesis; L-proline biosynthesis; L-glutamate 5-semialdehyde from L-glutamate: step 2/2. In terms of biological role, catalyzes the NADPH-dependent reduction of L-glutamate 5-phosphate into L-glutamate 5-semialdehyde and phosphate. The product spontaneously undergoes cyclization to form 1-pyrroline-5-carboxylate. This is Gamma-glutamyl phosphate reductase from Mycobacterium sp. (strain JLS).